Consider the following 160-residue polypeptide: uncharacterized protein (160 aa).

This is an uncharacterized protein from Galliformes (FAdV-1).